The following is a 407-amino-acid chain: Probable tRNA sulfurtransferase (407 aa).

A THUMP domain is found at 61 to 165; that stretch reads EEMCNRLKKV…LDAIYMYDQV (105 aa). ATP-binding positions include 183–184, 208–209, R265, G287, and Q296; these read ML and HF.

This sequence belongs to the ThiI family.

The protein resides in the cytoplasm. It carries out the reaction [ThiI sulfur-carrier protein]-S-sulfanyl-L-cysteine + a uridine in tRNA + 2 reduced [2Fe-2S]-[ferredoxin] + ATP + H(+) = [ThiI sulfur-carrier protein]-L-cysteine + a 4-thiouridine in tRNA + 2 oxidized [2Fe-2S]-[ferredoxin] + AMP + diphosphate. It catalyses the reaction [ThiS sulfur-carrier protein]-C-terminal Gly-Gly-AMP + S-sulfanyl-L-cysteinyl-[cysteine desulfurase] + AH2 = [ThiS sulfur-carrier protein]-C-terminal-Gly-aminoethanethioate + L-cysteinyl-[cysteine desulfurase] + A + AMP + 2 H(+). Its pathway is cofactor biosynthesis; thiamine diphosphate biosynthesis. In terms of biological role, catalyzes the ATP-dependent transfer of a sulfur to tRNA to produce 4-thiouridine in position 8 of tRNAs, which functions as a near-UV photosensor. Also catalyzes the transfer of sulfur to the sulfur carrier protein ThiS, forming ThiS-thiocarboxylate. This is a step in the synthesis of thiazole, in the thiamine biosynthesis pathway. The sulfur is donated as persulfide by IscS. The protein is Probable tRNA sulfurtransferase of Staphylococcus saprophyticus subsp. saprophyticus (strain ATCC 15305 / DSM 20229 / NCIMB 8711 / NCTC 7292 / S-41).